The chain runs to 1624 residues: MKAIYRGMCPNCRGAITDERLSNKNPCEGCLSEPILSEDYNELIVAVRNALKLRGTLKDWEELYRLNKEVSEIEELFEKSTGFKFWSAQRTWVKRIIRGKSFSIIAPTGMGKSTFGAFISIYFATKGKKSYIVVPTTPLVIQTVKKIESMLEKANVSVRLVYYHGNLRKKEKEEALEKIRNGDFDILITSSQFLATRFKELLKDKKFDLIFVDDVDAFLKASKNIDRSLIMLGFSEEIIGRAWEVIKLKKQLAKLLQNEKKNEEEIEKLNKEIEKIEDEIEEYKRRNKIGILIVASATGSAKGDRIKLYRELLGFEVGSGRSVLRNIVDTYLLPEKPIEEHVVELLRKLGKGGLIFVPIDKGIEYAEELTDYLKSQGFKVELVSAKNKKGLELFEKGEIDYLVGVATYYGTLVRGLDLPHLIRFAIFTGVPKFRFSMDLEQPTIYRVLGLMSEILEFLPEEKKSEGEKLYARLRRLIRNIPQYELMKIEEALAEGLELEGFHNHVLEVFKQSVEFLREVLKDEEVIKKIAENPFLSLKEIEGKLYIEIPDVRTYIQASGRTSRLFAGGITKGLSVIIVDDQKVFNGLIRQMRWRFVEFDIKKFEEVNLKEVLKEIDRDREKVKLVIEGKISEQVKDLVKSALMIVESPNKARTIASFFGQPSKRKIGDLTAYEVSIGDKMLTILASGGHMFDLVTNEGYHGVLILKNNGKPYFVPVYDTIKRCRDCGHQFVDWEQKGVCPRCGSRNVHDALENVKAMRELALEVDEILIGTDPDTEGEKIAWDIRNVLAPYAPNIKRIEFHEVTRPAILRAIREARDINEDRVNAQLVRRIEDRWIGFELSQKLWEVFENRNLSAGRVQTPVLGWIVQRYKEFTESETDFLGIILENGINVTIENAKGEVREVEVKDVIIEEKDVNPLPPYTTDTMLQDASRFLGFSATKTMQLAQDLFEAGLCVTPDTLVSLSDGRIIEIREAVENSEESLLGINGLKPKEAKALKFWEIDWDGPIKVIKLKNGHEIKATPDHGLLVMRDGKIGWVSAKNIREGDYVAFIYNLGHRGGKKYTLPQLLKELGISEYENSSSQELNNREQEMDSKQISIELDERFWYIFGVILGKGTLKGDKVVIFQKDVKPVIEEALPFVRIFESADHIGFSHLILAEVFRRLGVGEGKLHSLVFGLREEYINAMIAGYFDASGTFLRRAVLTSKRGDILRMLSVYLYQIGIVNNLRRDEHAGVWELIISDLEKFREKIYPYLRIKKSQFDKVYSISKNEGDFLPVASIFRKLKFRDGFKNRILDEEIPRDEVAKVLEYAEDSPEKEFLNSLVEARVTWVRVEKIEERHYTGKLYDFTTTTENFISNGIVSHNCTYHRTDSIHVSNTGIEVAKEYITQEIGEEYFTPRKWGEEGAHEAIRPTRPIDTGRLIQLIRDGIITIPKNLTRDHFRLYDLIFRRFMASQMKPAKILYEKAIISTPFKDVEVEGYIDVLYDGWSKIKSLPLRQIPKLEKGQRLRVKEVKQWRAPKVSLYTQGDVIALMKERGIGRPSTYAKIVQTLLQRGYVIETKGKKKLVPTEKGIKVYQYLITKYKDLVSEERTRQLEKIMDMVEEAKADYQDVLNELYEEIKRYVR.

The RG N-terminal-type zinc finger occupies 1–42; sequence MKAIYRGMCPNCRGAITDERLSNKNPCEGCLSEPILSEDYNE. Zn(2+)-binding residues include C9, C12, C27, and C30. ATP is bound by residues Q89 and 106–113; that span reads APTGMGKS. One can recognise a Helicase ATP-binding domain in the interval 93-256; that stretch reads VKRIIRGKSF…KLKKQLAKLL (164 aa). Positions 213–216 match the DEAD box motif; the sequence is DDVD. A topoisomerase I region spans residues 636 to 1624; the sequence is DLVKSALMIV…LYEEIKRYVR (989 aa). The Toprim domain maps to 640 to 803; sequence SALMIVESPN…NIKRIEFHEV (164 aa). E646 serves as a coordination point for Mg(2+). Residues 720–749 form an RG C-terminal-type zinc finger; that stretch reads IKRCRDCGHQFVDWEQKGVCPRCGSRNVHD. Zn(2+)-binding residues include C723, C726, C739, and C742. Position 772 (D772) interacts with Mg(2+). In terms of domain architecture, Topo IA-type catalytic spans 819 to 1623; that stretch reads NEDRVNAQLV…ELYEEIKRYV (805 aa). The region spanning 1107–1222 is the DOD-type homing endonuclease domain; it reads IFGVILGKGT…LSVYLYQIGI (116 aa). Y1366 serves as the catalytic O-(5'-phospho-DNA)-tyrosine intermediate.

In the N-terminal section; belongs to the DEAD box helicase family. DDVD subfamily. This sequence in the C-terminal section; belongs to the type IA topoisomerase family. Monomer. It depends on Zn(2+) as a cofactor. Mg(2+) serves as cofactor. Post-translationally, this protein undergoes a protein self splicing that involves a post-translational excision of the intervening region (intein) followed by peptide ligation.

It is found in the cytoplasm. The enzyme catalyses ATP + H2O = ADP + phosphate + H(+). Its function is as follows. Modifies the topological state of DNA by introducing positive supercoils in an ATP-dependent process, increasing the linking number in steps of +1. Binds to single-stranded DNA, transiently cleaves and then rejoins the ends, introducing a positive supercoil in the process. The scissile phosphodiester is attacked by the catalytic tyrosine of the enzyme, resulting in the formation of a DNA-(5'-phosphotyrosyl)-enzyme intermediate. Probably involved in rewinding DNA strands in regions of the chromosome that have opened up to allow replication, transcription, DNA repair and/or for DNA protection. In Pyrococcus horikoshii (strain ATCC 700860 / DSM 12428 / JCM 9974 / NBRC 100139 / OT-3), this protein is Reverse gyrase.